Here is an 819-residue protein sequence, read N- to C-terminus: Myosin light chain kinase 3 (819 aa).

The tract at residues 146–460 (VPWRRGSPGD…PGVGNPEPEQ (315 aa)) is disordered. Serine 152 bears the Phosphoserine mark. Composition is skewed to basic and acidic residues over residues 158–170 (EENKERVEEEGAK) and 183–196 (DAREPGEESQKADV). The segment covering 307 to 318 (GPGPQCPGPPGL) has biased composition (pro residues). Phosphoserine occurs at positions 355, 401, and 408. The 256-residue stretch at 515–770 (VCQHEVLGGG…ATQCLKHEWL (256 aa)) folds into the Protein kinase domain. Residues 521–529 (LGGGRFGQV) and lysine 544 each bind ATP. Aspartate 636 functions as the Proton acceptor in the catalytic mechanism.

It belongs to the protein kinase superfamily. CAMK Ser/Thr protein kinase family. The cofactor is Mg(2+). Phosphorylated on serine residues.

Its subcellular location is the cytoplasm. The enzyme catalyses L-seryl-[myosin light chain] + ATP = O-phospho-L-seryl-[myosin light chain] + ADP + H(+). It catalyses the reaction L-threonyl-[myosin light chain] + ATP = O-phospho-L-threonyl-[myosin light chain] + ADP + H(+). Functionally, kinase that phosphorylates MYL2 in vitro. Promotes sarcomere formation in cardiomyocytes and increases cardiomyocyte contractility. The protein is Myosin light chain kinase 3 (MYLK3) of Pongo abelii (Sumatran orangutan).